A 595-amino-acid polypeptide reads, in one-letter code: Aspartate--tRNA(Asp/Asn) ligase (595 aa).

Glu175 lines the L-aspartate pocket. Residues 199-202 are aspartate; the sequence is QQYK. 2 residues coordinate L-aspartate: Arg221 and His454. 221–223 lines the ATP pocket; it reads RDE. Glu488 is an ATP binding site. L-aspartate is bound at residue Arg495. Residue 540–543 participates in ATP binding; sequence GIDR.

Belongs to the class-II aminoacyl-tRNA synthetase family. Type 1 subfamily. Homodimer.

Its subcellular location is the cytoplasm. It catalyses the reaction tRNA(Asx) + L-aspartate + ATP = L-aspartyl-tRNA(Asx) + AMP + diphosphate. In terms of biological role, aspartyl-tRNA synthetase with relaxed tRNA specificity since it is able to aspartylate not only its cognate tRNA(Asp) but also tRNA(Asn). Reaction proceeds in two steps: L-aspartate is first activated by ATP to form Asp-AMP and then transferred to the acceptor end of tRNA(Asp/Asn). The sequence is that of Aspartate--tRNA(Asp/Asn) ligase from Agrobacterium fabrum (strain C58 / ATCC 33970) (Agrobacterium tumefaciens (strain C58)).